We begin with the raw amino-acid sequence, 360 residues long: S-adenosylmethionine:tRNA ribosyltransferase-isomerase (360 aa).

Belongs to the QueA family. Monomer.

The protein resides in the cytoplasm. It catalyses the reaction 7-aminomethyl-7-carbaguanosine(34) in tRNA + S-adenosyl-L-methionine = epoxyqueuosine(34) in tRNA + adenine + L-methionine + 2 H(+). Its pathway is tRNA modification; tRNA-queuosine biosynthesis. Its function is as follows. Transfers and isomerizes the ribose moiety from AdoMet to the 7-aminomethyl group of 7-deazaguanine (preQ1-tRNA) to give epoxyqueuosine (oQ-tRNA). The polypeptide is S-adenosylmethionine:tRNA ribosyltransferase-isomerase (Sinorhizobium medicae (strain WSM419) (Ensifer medicae)).